A 300-amino-acid chain; its full sequence is ADP-ribosyl cyclase/cyclic ADP-ribose hydrolase 1 (300 aa).

Residues 1 to 21 (MANCEFSPVSGDKPCCRLSRR) are Cytoplasmic-facing. The chain crosses the membrane as a helical; Signal-anchor for type II membrane protein span at residues 22 to 42 (AQLCLGVSILVLILVVVLAVV). Topologically, residues 43–300 (VPRWRQQWSG…PEDSSCTSEI (258 aa)) are extracellular. 3 disulfide bridges follow: Cys67/Cys82, Cys99/Cys180, and Cys160/Cys173. N-linked (GlcNAc...) asparagine glycosylation occurs at Asn100. Residue Cys119 is part of the active site. A glycan (N-linked (GlcNAc...) asparagine) is linked at Asn164. The active site involves Cys201. N-linked (GlcNAc...) asparagine glycans are attached at residues Asn209 and Asn219. 2 disulfide bridges follow: Cys254/Cys275 and Cys287/Cys296.

Belongs to the ADP-ribosyl cyclase family. As to quaternary structure, homodimer. Expressed at high levels in pancreas, liver, kidney, brain, testis, ovary, placenta, malignant lymphoma and neuroblastoma.

The protein resides in the cell surface. It localises to the membrane. The catalysed reaction is 2'-phospho-cyclic ADP-ribose + nicotinate = nicotinate-adenine dinucleotide phosphate. The enzyme catalyses NAD(+) = cyclic ADP-beta-D-ribose + nicotinamide + H(+). It carries out the reaction NAD(+) + H2O = ADP-D-ribose + nicotinamide + H(+). It catalyses the reaction cyclic ADP-beta-D-ribose + H2O = ADP-D-ribose. The catalysed reaction is NADP(+) = 2'-phospho-cyclic ADP-ribose + nicotinamide. The enzyme catalyses nicotinate + NADP(+) = nicotinate-adenine dinucleotide phosphate + nicotinamide. With respect to regulation, ATP inhibits the cADPR hydrolyzing activity. Its function is as follows. Synthesizes cyclic ADP-ribose (cADPR), a second messenger for glucose-induced insulin secretion. Synthesizes the Ca(2+) mobilizer nicotinate-adenine dinucleotide phosphate, NAADP(+), from 2'-phospho-cADPR and nicotinic acid, as well as from NADP(+) and nicotinic acid. At both pH 5.0 and pH 7.4 preferentially transforms 2'-phospho-cADPR into NAADP(+), while preferentially cleaving NADP(+) to cADPR and ADPRP rather than into NADDP(+). Has cADPR hydrolase activity. The sequence is that of ADP-ribosyl cyclase/cyclic ADP-ribose hydrolase 1 (CD38) from Homo sapiens (Human).